The chain runs to 445 residues: Tubulin beta-1 chain (445 aa).

Residues Q11, E69, S138, G142, T143, G144, N204, and N226 each coordinate GTP. E69 serves as a coordination point for Mg(2+). The tract at residues 426 to 445 is disordered; it reads QDATAEDEEEYEDEEEEMAA. Residues 429–445 are compositionally biased toward acidic residues; sequence TAEDEEEYEDEEEEMAA.

The protein belongs to the tubulin family. As to quaternary structure, dimer of alpha and beta chains. A typical microtubule is a hollow water-filled tube with an outer diameter of 25 nm and an inner diameter of 15 nM. Alpha-beta heterodimers associate head-to-tail to form protofilaments running lengthwise along the microtubule wall with the beta-tubulin subunit facing the microtubule plus end conferring a structural polarity. Microtubules usually have 13 protofilaments but different protofilament numbers can be found in some organisms and specialized cells. Mg(2+) is required as a cofactor.

The protein localises to the cytoplasm. The protein resides in the cytoskeleton. Its function is as follows. Tubulin is the major constituent of microtubules, a cylinder consisting of laterally associated linear protofilaments composed of alpha- and beta-tubulin heterodimers. Microtubules grow by the addition of GTP-tubulin dimers to the microtubule end, where a stabilizing cap forms. Below the cap, tubulin dimers are in GDP-bound state, owing to GTPase activity of alpha-tubulin. This Eleusine indica (Goosegrass) protein is Tubulin beta-1 chain (TUBB1).